A 340-amino-acid chain; its full sequence is tRNA-specific 2-thiouridylase MnmA (340 aa).

Residues 6–13 (AMSGGVDS) and M32 each bind ATP. C92 functions as the Nucleophile in the catalytic mechanism. C92 and C186 are oxidised to a cystine. G116 is an ATP binding site. Residues 134–136 (KDQ) are interaction with tRNA. Catalysis depends on C186, which acts as the Cysteine persulfide intermediate. An interaction with tRNA region spans residues 288–289 (RY).

The protein belongs to the MnmA/TRMU family.

The protein localises to the cytoplasm. It catalyses the reaction S-sulfanyl-L-cysteinyl-[protein] + uridine(34) in tRNA + AH2 + ATP = 2-thiouridine(34) in tRNA + L-cysteinyl-[protein] + A + AMP + diphosphate + H(+). Functionally, catalyzes the 2-thiolation of uridine at the wobble position (U34) of tRNA, leading to the formation of s(2)U34. The polypeptide is tRNA-specific 2-thiouridylase MnmA (Campylobacter concisus (strain 13826)).